Here is a 443-residue protein sequence, read N- to C-terminus: Serine/threonine-protein kinase 40 (443 aa).

A compositionally biased stretch (basic and acidic residues) spans M1–G11. The tract at residues M1–G26 is disordered. Polar residues predominate over residues S14–G26. Positions F35 to I332 constitute a Protein kinase domain. ATP is bound by residues L41–I49 and K66. D197 functions as the Proton acceptor in the catalytic mechanism.

Belongs to the protein kinase superfamily. CAMK Ser/Thr protein kinase family.

It localises to the nucleus. The protein localises to the cytoplasm. It carries out the reaction L-seryl-[protein] + ATP = O-phospho-L-seryl-[protein] + ADP + H(+). It catalyses the reaction L-threonyl-[protein] + ATP = O-phospho-L-threonyl-[protein] + ADP + H(+). Functionally, may be a negative regulator of NF-kappa-B and p53-mediated gene transcription. This chain is Serine/threonine-protein kinase 40 (stk40), found in Xenopus tropicalis (Western clawed frog).